Consider the following 236-residue polypeptide: Mitochondrial-abundant heat soluble protein (236 aa).

The N-terminal 73 residues, 1 to 73, are a transit peptide targeting the mitochondrion; the sequence is MSRYLLRDVQ…AARAGVVLRG (73 aa). 2 disordered regions span residues 102–135 and 165–209; these read RIHS…NEAA and RSNG…EIVA. Composition is skewed to polar residues over residues 105–126 and 192–202; these read SQSS…NSPQ and APDSSKNTKSV. Residues 126–143 carry the MAHS motif motif; sequence QPEGKANEAAERAKQFMN.

Its subcellular location is the mitochondrion. Mitochondrial heat soluble protein acting as a molecular shield in water-deficient condition. This chain is Mitochondrial-abundant heat soluble protein, found in Ramazzottius varieornatus (Water bear).